The primary structure comprises 281 residues: Putative thiosulfate sulfurtransferase (281 aa).

Rhodanese domains lie at 18 to 125 (NTDG…ELTK) and 154 to 274 (AIGN…VPIE). The Cysteine persulfide intermediate role is filled by Cys-233. Arg-238 contacts substrate.

It carries out the reaction thiosulfate + hydrogen cyanide = thiocyanate + sulfite + 2 H(+). In terms of biological role, may be a sulfotransferase involved in the formation of thiosulfate. The polypeptide is Putative thiosulfate sulfurtransferase (cysA) (Saccharopolyspora erythraea (Streptomyces erythraeus)).